The following is a 161-amino-acid chain: Zinc finger protein KNUCKLES (161 aa).

A disordered region spans residues 1 to 33; that stretch reads MAEPPPSYLHFVGPAKTRSSSKRHSFSSSAHPA. The C2H2-type zinc finger occupies 38-60; that stretch reads FPCQYCPRKFYTSQALGGHQNAH. Residues 142–161 form a disordered region; it reads GGNGVMEEDEPLDLDLSLRL. The short motif at 155–159 is the EAR-like (transcriptional repression) element; that stretch reads LDLSL.

First expressed in developing carpel primordia, and later in stamens and ovules of flower buds.

It localises to the nucleus. In terms of biological role, may function as a transcriptional repressor of cellular proliferation that regulates floral determinacy and relative size of basal pattern elements along the proximo-distal axis of the developing gynoecium. The protein is Zinc finger protein KNUCKLES (KNU) of Arabidopsis thaliana (Mouse-ear cress).